A 704-amino-acid chain; its full sequence is Meprin A subunit beta (704 aa).

The signal sequence occupies residues 1-20; that stretch reads MDARHQPWFLVFATFLLVSG. Residues 21–64 constitute a propeptide that is removed on maturation; sequence LPAPEKFVKDIDGGIDQDIFDINQGLGLDLFEGDIKLEANGKNS. The Extracellular portion of the chain corresponds to 21–654; sequence LPAPEKFVKD…RCEKRGSTRD (634 aa). The Peptidase M12A domain maps to 63–257; that stretch reads NSIIGDHKRW…LKLNQLYNCT (195 aa). 3 disulfides stabilise this stretch: Cys104/Cys256, Cys125/Cys145, and Cys266/Cys428. A Zn(2+)-binding site is contributed by His153. Glu154 is a catalytic residue. 2 residues coordinate Zn(2+): His157 and His163. 9 N-linked (GlcNAc...) asparagine glycosylation sites follow: Asn193, Asn219, Asn255, Asn316, Asn422, Asn437, Asn529, Asn548, and Asn593. The MAM domain maps to 261–430; that stretch reads SFMDSCDFEL…INLSETRCPH (170 aa). In terms of domain architecture, MATH spans 431–586; sequence HIWHIQNFTQ…GDDIYILLTV (156 aa). The region spanning 607–647 is the EGF-like domain; the sequence is VHNACSEVVCQNGGICVVQDGRAECKCPAGEDWWYMGKRCE. Cystine bridges form between Cys611–Cys622, Cys616–Cys631, and Cys633–Cys646. The helical transmembrane segment at 655-678 threads the bilayer; sequence TVIIAVSSTVTVFAVMLIITLVSV. At 679-704 the chain is on the cytoplasmic side; that stretch reads YCTRRKYRKKARANTAAMTLENQHAF. Thr697 bears the Phosphothreonine mark.

Homotetramer consisting of disulfide-linked beta subunits, or heterotetramer of two alpha and two beta subunits formed by non-covalent association of two disulfide-linked heterodimers. Interacts with MBL2 through its carbohydrate moiety. This interaction may inhibit its catalytic activity. Interacts with TSPAN8. It depends on Zn(2+) as a cofactor. Proteolytically activated by trypsin in the intestinal lumen and kallikrein-related peptidases in other tissues. In terms of processing, N-glycosylated; contains high mannose and/or complex biantennary structures. Post-translationally, phosphorylated by PKC at multiple sites of its cytoplasmic part. Phosphorylation dcreases activity at the cell surface, leading to diminished substrate cleavage. Isoform 1 is expressed in kidney, intestinal brush borders, and salivary ducts. Isoform 2 has been found in carcinoma cells.

The protein resides in the cell membrane. It localises to the secreted. It carries out the reaction Hydrolysis of proteins, including azocasein, and peptides. Hydrolysis of 5-His-|-Leu-6, 6-Leu-|-Cys-7, 14-Ala-|-Leu-15 and 19-Cys-|-Gly-20 bonds in insulin B chain.. Strongly inhibited by fetuin-A/AHSG. Inhibited by cysteine and by the metal ion chelators EDTA and 1,10-phenanthroline. Not inhibited by 3,4-dichloroisocourmarin, soybean trypsin inhibitor, or the cysteine proteinase inhibitors iodoacetic acid and E-64. Membrane metallopeptidase that sheds many membrane-bound proteins. Exhibits a strong preference for acidic amino acids at the P1' position. Known substrates include: FGF19, VGFA, IL1B, IL18, procollagen I and III, E-cadherin, KLK7, gastrin, ADAM10, tenascin-C. The presence of several pro-inflammatory cytokine among substrates implicate MEP1B in inflammation. It is also involved in tissue remodeling due to its capability to degrade extracellular matrix components. In Mus musculus (Mouse), this protein is Meprin A subunit beta (Mep1b).